The chain runs to 674 residues: DNA ligase (674 aa).

Residues 31–35 (DYEYD), 80–81 (SL), and Glu-110 each bind NAD(+). Lys-112 acts as the N6-AMP-lysine intermediate in catalysis. Positions 133, 167, 283, and 307 each coordinate NAD(+). Positions 401, 404, 419, and 424 each coordinate Zn(2+). Positions 584–673 (KVEKIFEGMK…SKDEVKAVLE (90 aa)) constitute a BRCT domain.

Belongs to the NAD-dependent DNA ligase family. LigA subfamily. The cofactor is Mg(2+). Mn(2+) serves as cofactor.

The enzyme catalyses NAD(+) + (deoxyribonucleotide)n-3'-hydroxyl + 5'-phospho-(deoxyribonucleotide)m = (deoxyribonucleotide)n+m + AMP + beta-nicotinamide D-nucleotide.. Functionally, DNA ligase that catalyzes the formation of phosphodiester linkages between 5'-phosphoryl and 3'-hydroxyl groups in double-stranded DNA using NAD as a coenzyme and as the energy source for the reaction. It is essential for DNA replication and repair of damaged DNA. In Clostridioides difficile (strain 630) (Peptoclostridium difficile), this protein is DNA ligase.